The following is a 90-amino-acid chain: uncharacterized protein (90 aa).

The chain crosses the membrane as a helical span at residues M46–I62.

It is found in the membrane. This is an uncharacterized protein from Haemophilus influenzae (strain ATCC 51907 / DSM 11121 / KW20 / Rd).